Consider the following 700-residue polypeptide: Elongation factor G 2 (700 aa).

Positions 8–290 (ERYRNIGISA…AVLDFLPSPI (283 aa)) constitute a tr-type G domain. Residues 17–24 (AHIDAGKT), 88–92 (DTPGH), and 142–145 (NKMD) contribute to the GTP site.

Belongs to the TRAFAC class translation factor GTPase superfamily. Classic translation factor GTPase family. EF-G/EF-2 subfamily.

The protein resides in the cytoplasm. Functionally, catalyzes the GTP-dependent ribosomal translocation step during translation elongation. During this step, the ribosome changes from the pre-translocational (PRE) to the post-translocational (POST) state as the newly formed A-site-bound peptidyl-tRNA and P-site-bound deacylated tRNA move to the P and E sites, respectively. Catalyzes the coordinated movement of the two tRNA molecules, the mRNA and conformational changes in the ribosome. In Paraburkholderia xenovorans (strain LB400), this protein is Elongation factor G 2.